Reading from the N-terminus, the 628-residue chain is Nucleoside-triphosphatase 2 (628 aa).

Residues 1-25 (MWLPVYVPLLLVFGVSLSLPHGSLG) form the signal peptide. Catalysis depends on glutamate 236, which acts as the Proton acceptor. Asparagine 432 carries an N-linked (GlcNAc...) asparagine glycan.

Belongs to the GDA1/CD39 NTPase family. As to quaternary structure, homotetramer.

The protein resides in the secreted. Its subcellular location is the parasitophorous vacuole. The enzyme catalyses a ribonucleoside 5'-triphosphate + H2O = a ribonucleoside 5'-diphosphate + phosphate + H(+). Its function is as follows. May perform an important processing step in the conversion of high energy nucleotides prior to uptake by the parasite. NTPAse-II has a specific activity 4.5-fold lower than NTPAse-I in hydrolysis of ATP. The primary difference between these isozymes lies in their ability to hydrolyze nucleoside triphosphate versus diphosphate substrates. While NTPAse-II hydrolyzes ATP to ADP and ADP to AMP at almost the same rate, NTPAse-I hydrolyzes ADP to AMP at a much slower rate (0.7% of the rate for ATP). The sequence is that of Nucleoside-triphosphatase 2 (NTP1) from Toxoplasma gondii.